The sequence spans 526 residues: NAD(P)H-quinone oxidoreductase chain 4 2 (526 aa).

14 helical membrane-spanning segments follow: residues 6-26 (FPWL…LPLI), 36-56 (WYAL…FYTG), 91-111 (LILL…PVSF), 113-133 (PKLF…VFAV), 137-157 (LLFF…LSIW), 169-189 (FILY…TMAF), 212-232 (LLLY…FPLH), 243-263 (TAPA…YALL), 275-295 (ALFG…AALT), 306-326 (IAYS…SFTD), 332-352 (AMLQ…MVGA), 375-397 (IFAM…GFVA), 417-437 (VIIV…LLSM), and 464-484 (VFVI…PKAV).

It belongs to the complex I subunit 4 family.

It localises to the cellular thylakoid membrane. It catalyses the reaction a plastoquinone + NADH + (n+1) H(+)(in) = a plastoquinol + NAD(+) + n H(+)(out). The enzyme catalyses a plastoquinone + NADPH + (n+1) H(+)(in) = a plastoquinol + NADP(+) + n H(+)(out). Its function is as follows. NDH-1 shuttles electrons from NAD(P)H, via FMN and iron-sulfur (Fe-S) centers, to quinones in the respiratory chain. The immediate electron acceptor for the enzyme in this species is believed to be plastoquinone. Couples the redox reaction to proton translocation (for every two electrons transferred, four hydrogen ions are translocated across the cytoplasmic membrane), and thus conserves the redox energy in a proton gradient. This Picosynechococcus sp. (strain ATCC 27264 / PCC 7002 / PR-6) (Agmenellum quadruplicatum) protein is NAD(P)H-quinone oxidoreductase chain 4 2.